The primary structure comprises 130 residues: Small ribosomal subunit protein uS11 (130 aa).

The protein belongs to the universal ribosomal protein uS11 family. Part of the 30S ribosomal subunit. Interacts with proteins S7 and S18. Binds to IF-3.

Functionally, located on the platform of the 30S subunit, it bridges several disparate RNA helices of the 16S rRNA. Forms part of the Shine-Dalgarno cleft in the 70S ribosome. In Shewanella violacea (strain JCM 10179 / CIP 106290 / LMG 19151 / DSS12), this protein is Small ribosomal subunit protein uS11.